Reading from the N-terminus, the 208-residue chain is MQILLAALVAYLIGSVSFAVVVSSVMGLADPRSYGSKNPGATNVLRSGNKKAAILTLVGDAFKGWIAVWLARHFGLPDVAIAWVAIAVFLGHLYPVFFRFQGGKGVATAAGVLLAVHPVLGLATALTWLIVAFFFRYSSLAALVAAVFAPVFDVFLFGMPGHNPVAWAVLAMSVLLVWRHRGNISKLLAGQESRIGDKKKAAADGGKA.

Helical transmembrane passes span 3–23 (ILLA…VVVS), 51–71 (KAAI…VWLA), 78–98 (DVAI…PVFF), 115–135 (AVHP…AFFF), and 140–160 (LAAL…FGMP).

This sequence belongs to the PlsY family. As to quaternary structure, probably interacts with PlsX.

It localises to the cell inner membrane. The enzyme catalyses an acyl phosphate + sn-glycerol 3-phosphate = a 1-acyl-sn-glycero-3-phosphate + phosphate. Its pathway is lipid metabolism; phospholipid metabolism. Catalyzes the transfer of an acyl group from acyl-phosphate (acyl-PO(4)) to glycerol-3-phosphate (G3P) to form lysophosphatidic acid (LPA). This enzyme utilizes acyl-phosphate as fatty acyl donor, but not acyl-CoA or acyl-ACP. The sequence is that of Glycerol-3-phosphate acyltransferase from Burkholderia orbicola (strain MC0-3).